A 128-amino-acid polypeptide reads, in one-letter code: 3-aminoacrylate deaminase RutC (128 aa).

Belongs to the RutC family. As to quaternary structure, homotrimer.

It carries out the reaction (Z)-3-aminoacrylate + H2O + H(+) = 3-oxopropanoate + NH4(+). Involved in pyrimidine catabolism. Catalyzes the deamination of 3-aminoacrylate to malonic semialdehyde, a reaction that can also occur spontaneously. RutC may facilitate the reaction and modulate the metabolic fitness, rather than catalyzing essential functions. This chain is 3-aminoacrylate deaminase RutC, found in Shigella flexneri serotype X (strain 2002017).